The primary structure comprises 418 residues: Acetylornithine aminotransferase (418 aa).

Residues 116 to 117 (GA) and F149 contribute to the pyridoxal 5'-phosphate site. R152 serves as a coordination point for N(2)-acetyl-L-ornithine. 240-243 (DEVQ) is a pyridoxal 5'-phosphate binding site. Residue K269 is modified to N6-(pyridoxal phosphate)lysine. S296 is a binding site for N(2)-acetyl-L-ornithine. Position 297 (T297) interacts with pyridoxal 5'-phosphate.

It belongs to the class-III pyridoxal-phosphate-dependent aminotransferase family. ArgD subfamily. Homodimer. The cofactor is pyridoxal 5'-phosphate.

The protein resides in the cytoplasm. It carries out the reaction N(2)-acetyl-L-ornithine + 2-oxoglutarate = N-acetyl-L-glutamate 5-semialdehyde + L-glutamate. Its pathway is amino-acid biosynthesis; L-arginine biosynthesis; N(2)-acetyl-L-ornithine from L-glutamate: step 4/4. The chain is Acetylornithine aminotransferase from Prochlorococcus marinus (strain MIT 9313).